A 260-amino-acid chain; its full sequence is 3'-5' ssDNA/RNA exonuclease TatD (260 aa).

A divalent metal cation-binding residues include glutamate 91, histidine 127, and histidine 152.

This sequence belongs to the metallo-dependent hydrolases superfamily. TatD-type hydrolase family. TatD subfamily. Monomer. The cofactor is Mg(2+). Mn(2+) is required as a cofactor.

The protein resides in the cytoplasm. 3'-5' exonuclease that prefers single-stranded DNA and RNA. May play a role in the H(2)O(2)-induced DNA damage repair. The polypeptide is 3'-5' ssDNA/RNA exonuclease TatD (Escherichia coli (strain K12)).